The sequence spans 637 residues: 3D-(3,5/4)-trihydroxycyclohexane-1,2-dione hydrolase (637 aa).

Residue Glu-66 coordinates thiamine diphosphate. Positions 442–522 (SLPGDLQRLW…INVLLFDNSG (81 aa)) are thiamine pyrophosphate binding. Mg(2+) contacts are provided by Asp-493 and Asn-520.

It belongs to the TPP enzyme family. Mg(2+) is required as a cofactor. Requires thiamine diphosphate as cofactor.

The enzyme catalyses 3D-3,5/4-trihydroxycyclohexane-1,2-dione + H2O = 5-deoxy-D-glucuronate + H(+). It participates in polyol metabolism; myo-inositol degradation into acetyl-CoA; acetyl-CoA from myo-inositol: step 3/7. Its function is as follows. Involved in the cleavage of the C1-C2 bond of 3D-(3,5/4)-trihydroxycyclohexane-1,2-dione (THcHDO) to yield 5-deoxy-glucuronate (5DG). The protein is 3D-(3,5/4)-trihydroxycyclohexane-1,2-dione hydrolase of Bacillus licheniformis (strain ATCC 14580 / DSM 13 / JCM 2505 / CCUG 7422 / NBRC 12200 / NCIMB 9375 / NCTC 10341 / NRRL NRS-1264 / Gibson 46).